A 459-amino-acid chain; its full sequence is Interleukin-7 receptor subunit alpha (459 aa).

Residues 1–20 form the signal peptide; that stretch reads MTILGTTFGVFFSLLQVVSG. The Extracellular portion of the chain corresponds to 21 to 241; that stretch reads ESGYAQNGDL…NNHSGETNPT (221 aa). Cys-42 and Cys-57 are joined by a disulfide. 2 N-linked (GlcNAc...) asparagine glycosylation sites follow: Asn-49 and Asn-65. Cystine bridges form between Cys-74-Cys-82 and Cys-108-Cys-118. The Fibronectin type-III domain maps to 131–231; the sequence is APFDLSVIYR…PSYYFRTPEI (101 aa). Asn-182 carries N-linked (GlcNAc...) asparagine glycosylation. The WSXWS motif motif lies at 217–221; sequence WSEWS. Residues 242–262 traverse the membrane as a helical segment; sequence LLTISILSVLSVVLLVILACV. The Cytoplasmic segment spans residues 263-459; that stretch reads LWKKRIKPII…VTMSSFCQKR (197 aa). The Box 1 motif motif lies at 272–280; it reads IWPSLPDHK. Thr-282 bears the Phosphothreonine; by PKC mark. Residues 327-357 are disordered; it reads TVPPQLEESETQRPGGDVQSPSWPSENVVTT. A compositionally biased stretch (polar residues) spans 345–357; the sequence is QSPSWPSENVVTT.

The protein belongs to the type I cytokine receptor family. Type 4 subfamily. As to quaternary structure, the IL7 receptor is a heterodimer of IL7R and IL2RG. The TSLP receptor is a heterodimer of CRLF2 and IL7R. Interacts with CD53. In terms of processing, N-glycosylated IL-7Ralpha binds IL7 300-fold more tightly than the unglycosylated form. Post-translationally, ubiquitinated by MARCHF8; leading to lysosomal degradation.

It localises to the cell membrane. In terms of biological role, receptor for interleukin-7. Also acts as a receptor for thymic stromal lymphopoietin (TSLP). In Callithrix jacchus (White-tufted-ear marmoset), this protein is Interleukin-7 receptor subunit alpha (IL7R).